The primary structure comprises 579 residues: Isocitrate dehydrogenase kinase/phosphatase (579 aa).

ATP-binding positions include 324–330 (ADGTPGM) and K345. The active site involves D380.

The protein belongs to the AceK family.

It is found in the cytoplasm. It catalyses the reaction L-seryl-[isocitrate dehydrogenase] + ATP = O-phospho-L-seryl-[isocitrate dehydrogenase] + ADP + H(+). In terms of biological role, bifunctional enzyme which can phosphorylate or dephosphorylate isocitrate dehydrogenase (IDH) on a specific serine residue. This is a regulatory mechanism which enables bacteria to bypass the Krebs cycle via the glyoxylate shunt in response to the source of carbon. When bacteria are grown on glucose, IDH is fully active and unphosphorylated, but when grown on acetate or ethanol, the activity of IDH declines drastically concomitant with its phosphorylation. The chain is Isocitrate dehydrogenase kinase/phosphatase from Xanthomonas campestris pv. campestris (strain 8004).